The chain runs to 508 residues: Drug efflux pump JefA (508 aa).

The next 14 helical transmembrane spans lie at 9–29 (VLATGLGIFMVFVDVNIVNVA), 46–66 (WAVAGYSLGMAAVLMSCALLG), 75–95 (FVFGVTLFVVSSIVCVLPVSL), 104–124 (IQGLGAAFISVLSLALLSHSF), 136–156 (NWMAIGMVGAASAPALGGLMV), 163–183 (SVFLVNVPLGAIVWLLTLVGV), 194–214 (LDWVGQLTLIPAVALIAYTII), 222–242 (QSAGFVAALLLAAGVLLWLFV), 265–285 (SVLIVYFVVMSCFFGTLMVIT), 297–317 (LHAGLMMLPVPAGFGVASLLA), 328–348 (LPVLTCLAAMFIGLAIFAISM), 354–374 (VALVGLTIFGAGAGGCATPLL), 399–419 (LGGIFGVAFLGTIVAAWLGAA), and 479–499 (GIKLALGGAAVLLTGAFVLGW).

It belongs to the major facilitator superfamily.

It is found in the cell inner membrane. Involved in resistance to ethambutol and isoniazid. The polypeptide is Drug efflux pump JefA (Mycobacterium tuberculosis (strain CDC 1551 / Oshkosh)).